Consider the following 530-residue polypeptide: Arginine--tRNA ligase (530 aa).

A 'HIGH' region motif is present at residues 113 to 123; sequence ANPTGPLHIGH.

This sequence belongs to the class-I aminoacyl-tRNA synthetase family. In terms of assembly, monomer.

Its subcellular location is the cytoplasm. It carries out the reaction tRNA(Arg) + L-arginine + ATP = L-arginyl-tRNA(Arg) + AMP + diphosphate. The protein is Arginine--tRNA ligase of Campylobacter jejuni (strain RM1221).